The following is a 216-amino-acid chain: Probable nicotinate-nucleotide adenylyltransferase (216 aa).

Belongs to the NadD family.

The catalysed reaction is nicotinate beta-D-ribonucleotide + ATP + H(+) = deamido-NAD(+) + diphosphate. It functions in the pathway cofactor biosynthesis; NAD(+) biosynthesis; deamido-NAD(+) from nicotinate D-ribonucleotide: step 1/1. Catalyzes the reversible adenylation of nicotinate mononucleotide (NaMN) to nicotinic acid adenine dinucleotide (NaAD). This is Probable nicotinate-nucleotide adenylyltransferase from Geotalea daltonii (strain DSM 22248 / JCM 15807 / FRC-32) (Geobacter daltonii).